We begin with the raw amino-acid sequence, 264 residues long: Tryptophan synthase alpha chain (264 aa).

Catalysis depends on proton acceptor residues E49 and D60.

Belongs to the TrpA family. As to quaternary structure, tetramer of two alpha and two beta chains.

The enzyme catalyses (1S,2R)-1-C-(indol-3-yl)glycerol 3-phosphate + L-serine = D-glyceraldehyde 3-phosphate + L-tryptophan + H2O. It functions in the pathway amino-acid biosynthesis; L-tryptophan biosynthesis; L-tryptophan from chorismate: step 5/5. In terms of biological role, the alpha subunit is responsible for the aldol cleavage of indoleglycerol phosphate to indole and glyceraldehyde 3-phosphate. The sequence is that of Tryptophan synthase alpha chain from Synechocystis sp. (strain ATCC 27184 / PCC 6803 / Kazusa).